The primary structure comprises 393 residues: MAGPEWQSLEQCLEKHLPPDDLSQVKRILYGKQTRNLDLPRKALEAASERNFELKGYAFGAAKEQQRCPQIVRVGLVQNRIPLPTSAPVAEQVSALHKRIEEIAEVAAMCGVNIICFQEAWNMPFAFCTREKLPWTEFAESAEDGLTTRFCQKLAKKHNMVVISPILERDRDHGGVLWNTAVVISNSGLVMGKTRKNHIPRVGDFNESTYYMEGNLGHPVFQTQFGRIAVNICYGRHHPLNWLMYSVNGAEIIFNPSATIGELSESMWPIEARNAAIANHCFTCALNRVGQEHYPNEFTSGDGKKAHHDLGYFYGSSYVAAPDGSRTPGLSRNQDGLLVTELNLNLCQQINDFWTFKMTGRLEMYARELAEAVKPNYSPNIVKEDLVLAPSSG.

The CN hydrolase domain maps to 72–344 (VRVGLVQNRI…DGLLVTELNL (273 aa)). Glu-119 serves as the catalytic Proton acceptor. Lys-196 acts as the Proton donor in catalysis. Residue Cys-233 is the Nucleophile of the active site. Ser-378 carries the post-translational modification Phosphoserine.

The protein belongs to the carbon-nitrogen hydrolase superfamily. BUP family. Homodimer, homotetramer, homooctamer; can also form higher homooligomers. In terms of processing, the N-terminus is blocked. As to expression, detected in liver (at protein level).

Its subcellular location is the cytoplasm. It catalyses the reaction 3-(carbamoylamino)propanoate + H2O + 2 H(+) = beta-alanine + NH4(+) + CO2. It carries out the reaction 3-(carbamoylamino)-2-methylpropanoate + H2O + 2 H(+) = (R)-3-amino-2-methylpropanoate + NH4(+) + CO2. Its pathway is amino-acid biosynthesis; beta-alanine biosynthesis. Its activity is regulated as follows. Allosteric enzyme with positive cooperativity toward the substrate N-carbamoyl-beta-alanine at low substrate concentrations (below 12 nM). Displays no cooperativity at substrate levels above 12 nM. Functionally, catalyzes a late step in pyrimidine degradation. Converts N-carbamoyl-beta-alanine (3-ureidopropanoate) into beta-alanine, ammonia and carbon dioxide. Likewise, converts N-carbamoyl-beta-aminoisobutyrate (3-ureidoisobutyrate) into beta-aminoisobutyrate, ammonia and carbon dioxide. This Rattus norvegicus (Rat) protein is Beta-ureidopropionase (Upb1).